A 295-amino-acid chain; its full sequence is MMLIDGKKVSTDLKNELKTRVEELKAKAGCVPGLTVIIVGEDPASQVYVRNKAKSCKETGMNSTVIELPAETTQEELLGKIEALNQDPDVHGILVQQPLPSHIEEYAVTMAIDPAKDVDGFHPENVGQMVLGNLDKCFISCTPFGILELLRRYDIETRGKHCVVVGRSNIVGKPMANLMLQKLRETNCTVTVCHSATQNMPELTRQADILIAAIGRANFITREMVKPGAVVIDVGINRIEDPSRKSGFRLAGDVDFDNVAEMASAITPVPGGVGPMTIAMLLKNTLQSFARSHNL.

Residues 166 to 168 (GRS), Ser195, and Ile236 each bind NADP(+).

It belongs to the tetrahydrofolate dehydrogenase/cyclohydrolase family. Homodimer.

It carries out the reaction (6R)-5,10-methylene-5,6,7,8-tetrahydrofolate + NADP(+) = (6R)-5,10-methenyltetrahydrofolate + NADPH. It catalyses the reaction (6R)-5,10-methenyltetrahydrofolate + H2O = (6R)-10-formyltetrahydrofolate + H(+). It participates in one-carbon metabolism; tetrahydrofolate interconversion. Catalyzes the oxidation of 5,10-methylenetetrahydrofolate to 5,10-methenyltetrahydrofolate and then the hydrolysis of 5,10-methenyltetrahydrofolate to 10-formyltetrahydrofolate. This Prosthecochloris aestuarii (strain DSM 271 / SK 413) protein is Bifunctional protein FolD.